Reading from the N-terminus, the 166-residue chain is Large ribosomal subunit protein uL11 (166 aa).

It belongs to the universal ribosomal protein uL11 family. In terms of assembly, part of the ribosomal stalk of the 50S ribosomal subunit. Interacts with L10 and the large rRNA to form the base of the stalk. L10 forms an elongated spine to which L12 dimers bind in a sequential fashion forming a multimeric L10(L12)X complex.

Its function is as follows. Forms part of the ribosomal stalk which helps the ribosome interact with GTP-bound translation factors. This Methanopyrus kandleri (strain AV19 / DSM 6324 / JCM 9639 / NBRC 100938) protein is Large ribosomal subunit protein uL11.